Here is a 663-residue protein sequence, read N- to C-terminus: MAAKEKLEAVLNVALRVPSIMLLDVLYRWDVSSFFQQIQRSSLSNNPLFQYKYLALNMHYVGYILSVVLLTLPRQHLVQLYLYFLTALLLYAGHQISRDYVRSELEFAYEGPMYLEPLSMNRFTTALIGQLVVCTLCSCVMKTKQIWLFSAHMLPLLARLCLVPLETIVIINKFAMIFTGLEVLYFLGSNLLVPYNLAKSAYRELVQVVEVYGLLALGMSLWNQLVVPVLFMVFWLVLFALQIYSYFSTRDQPASRERLLFLFLTSIAECCSTPYSLLGLVFTVSFVALGVLTLCKFYLQGYRAFMNDPAMNRGMTEGVTLLILAVQTGLIELQVVHRAFLLSIILFIVVASILQSMLEIADPIVLALGASRDKSLWKHFRAVSLCLFLLVFPAYMAYMICQFFHMDFWLLIIISSSILTSLQVLGTLFIYVLFMVEEFRKEPVENMDDVIYYVNGTYRLLEFLVALCVVAYGVSETIFGEWTVMGSMIIFIHSYYNVWLRAQLGWKSFLLRRDAVNKIKSLPIATKEQLEKHNDICAICYQDMKSAVITPCSHFFHAGCLKKWLYVQETCPLCHCHLKNSSQLPGLGTEPVLQPHAGAEQNVMFQEGTEPPGQEHTPGTRIQEGSRDNNEYIARRPDNQEGAFDPKEYPHSAKDEAHPVESA.

The next 14 helical transmembrane spans lie at 53-73 (YLALNMHYVGYILSVVLLTLP), 77-97 (LVQLYLYFLTALLLYAGHQIS), 123-143 (FTTALIGQLVVCTLCSCVMKT), 146-166 (IWLFSAHMLPLLARLCLVPLE), 168-188 (IVIINKFAMIFTGLEVLYFLG), 205-222 (LVQVVEVYGLLALGMSLW), 225-245 (LVVPVLFMVFWLVLFALQIYS), 275-295 (YSLLGLVFTVSFVALGVLTLC), 316-336 (TEGVTLLILAVQTGLIELQVV), 340-360 (FLLSIILFIVVASILQSMLEI), 384-404 (SLCLFLLVFPAYMAYMICQFF), 410-430 (LLIIISSSILTSLQVLGTLFI), 460-480 (LLEFLVALCVVAYGVSETIFG), and 482-502 (WTVMGSMIIFIHSYYNVWLRA). The YLYF motif signature appears at 81 to 84 (YLYF). The active site involves cysteine 537. The segment at 537 to 575 (CAICYQDMKSAVITPCSHFFHAGCLKKWLYVQETCPLCH) adopts an RING-type; atypical zinc-finger fold. Positions 607 to 663 (EGTEPPGQEHTPGTRIQEGSRDNNEYIARRPDNQEGAFDPKEYPHSAKDEAHPVESA) are disordered. Residues 624-663 (EGSRDNNEYIARRPDNQEGAFDPKEYPHSAKDEAHPVESA) are compositionally biased toward basic and acidic residues.

In terms of assembly, interacts (via YLYF motif) with INSIG1 and INSIG2.

It is found in the endoplasmic reticulum membrane. The enzyme catalyses S-ubiquitinyl-[E2 ubiquitin-conjugating enzyme]-L-cysteine + [acceptor protein]-L-lysine = [E2 ubiquitin-conjugating enzyme]-L-cysteine + N(6)-ubiquitinyl-[acceptor protein]-L-lysine.. Its function is as follows. E3 ubiquitin ligase that catalyzes the direct transfer of ubiquitin from E2 ubiquitin-conjugating enzyme to a specific substrate. In response to bacterial infection, negatively regulates the phagocyte oxidative burst by controlling the turnover of the NADPH oxidase complex subunits. Promotes monoubiquitination of CYBA and 'Lys-48'-linked polyubiquitination and degradation of CYBB NADPH oxidase catalytic subunits, both essential for the generation of antimicrobial reactive oxygen species. Involved in the maintenance of cholesterol homeostasis. In response to high sterol concentrations ubiquitinates HMGCR, a rate-limiting enzyme in cholesterol biosynthesis, and targets it for degradation. The interaction with INSIG1 is required for this function. In addition, triggers ubiquitination of SCAP, likely inhibiting its transport to the Golgi apparatus and the subsequent processing/maturation of SREBPF2, ultimately down-regulating cholesterol biosynthesis. In Homo sapiens (Human), this protein is RING finger protein 145.